We begin with the raw amino-acid sequence, 100 residues long: Urease subunit gamma (100 aa).

It belongs to the urease gamma subunit family. Heterotrimer of UreA (gamma), UreB (beta) and UreC (alpha) subunits. Three heterotrimers associate to form the active enzyme.

It localises to the cytoplasm. It carries out the reaction urea + 2 H2O + H(+) = hydrogencarbonate + 2 NH4(+). Its pathway is nitrogen metabolism; urea degradation; CO(2) and NH(3) from urea (urease route): step 1/1. The sequence is that of Urease subunit gamma from Photorhabdus laumondii subsp. laumondii (strain DSM 15139 / CIP 105565 / TT01) (Photorhabdus luminescens subsp. laumondii).